A 396-amino-acid polypeptide reads, in one-letter code: Probable sugar efflux transporter (396 aa).

12 helical membrane-spanning segments follow: residues 15-35 (VVTL…PVGL), 50-70 (VGIM…PFML), 81-101 (LICL…SWSF), 103-123 (VLVI…SITA), 136-156 (AQAL…GLPL), 170-190 (FFAI…LLPL), 209-229 (PALM…YTAY), 246-266 (FATA…VIFG), 275-295 (ALVS…LPAA), 299-319 (IHLG…GLGM), 333-353 (VAMA…ALVG), and 364-384 (MIGY…IIIF).

Belongs to the major facilitator superfamily. SotB (TC 2.A.1.2) family.

The protein resides in the cell inner membrane. Its function is as follows. Involved in the efflux of sugars. The physiological role may be the reduction of the intracellular concentration of toxic sugars or sugar metabolites. The chain is Probable sugar efflux transporter from Escherichia coli O6:K15:H31 (strain 536 / UPEC).